Here is a 1368-residue protein sequence, read N- to C-terminus: DNA-directed RNA polymerase subunit beta (1368 aa).

It belongs to the RNA polymerase beta chain family. As to quaternary structure, the RNAP catalytic core consists of 2 alpha, 1 beta, 1 beta' and 1 omega subunit. When a sigma factor is associated with the core the holoenzyme is formed, which can initiate transcription.

It carries out the reaction RNA(n) + a ribonucleoside 5'-triphosphate = RNA(n+1) + diphosphate. Its function is as follows. DNA-dependent RNA polymerase catalyzes the transcription of DNA into RNA using the four ribonucleoside triphosphates as substrates. The sequence is that of DNA-directed RNA polymerase subunit beta from Burkholderia pseudomallei (strain K96243).